Reading from the N-terminus, the 344-residue chain is Glyceraldehyde-3-phosphate dehydrogenase (344 aa).

Residues 11–12 and Gly110 contribute to the NAD(+) site; that span reads TI. 139–141 is a binding site for D-glyceraldehyde 3-phosphate; that stretch reads SCN. Catalysis depends on Cys140, which acts as the Nucleophile. Arg169 contacts NAD(+). 195–196 provides a ligand contact to D-glyceraldehyde 3-phosphate; sequence HG. NAD(+) is bound at residue Gln302.

It belongs to the glyceraldehyde-3-phosphate dehydrogenase family. In terms of assembly, homotetramer.

Its subcellular location is the cytoplasm. It catalyses the reaction D-glyceraldehyde 3-phosphate + phosphate + NADP(+) = (2R)-3-phospho-glyceroyl phosphate + NADPH + H(+). The catalysed reaction is D-glyceraldehyde 3-phosphate + phosphate + NAD(+) = (2R)-3-phospho-glyceroyl phosphate + NADH + H(+). Its pathway is carbohydrate degradation; glycolysis; pyruvate from D-glyceraldehyde 3-phosphate: step 1/5. The chain is Glyceraldehyde-3-phosphate dehydrogenase from Pyrobaculum arsenaticum (strain DSM 13514 / JCM 11321 / PZ6).